The following is a 503-amino-acid chain: Transcriptional regulator LovE (503 aa).

The segment at residues 35–67 is a DNA-binding region (zn(2)-C6 fungal-type); it reads CDRCHAQKIKCTGNKEVTGRAPCQRCQQAGLRC. Disordered regions lie at residues 89-124 and 331-358; these read ADPD…RQFL and SHMS…HSSV. Residues 339-357 show a composition bias toward low complexity; the sequence is SRSQSPSRDDTSSSSGHSS.

The protein localises to the nucleus. Functionally, transcription factor that regulates the expression of the he gene cluster that mediates the biosynthesis of lovastatin (also known as mevinolin, mevacor or monacolin K), a hypolipidemic inhibitor of (3S)-hydroxymethylglutaryl-coenzyme A (HMG-CoA) reductase (HMGR). This Aspergillus terreus protein is Transcriptional regulator LovE.